The following is a 346-amino-acid chain: Acetylserotonin O-methyltransferase (346 aa).

S-adenosyl-L-methionine contacts are provided by residues Y148, W165, D211, 236–238, and K253; that span reads GDF. The active-site Proton donor/acceptor is the H256. 3 residues coordinate substrate: D257, N303, and Q307.

The protein belongs to the class I-like SAM-binding methyltransferase superfamily. Cation-independent O-methyltransferase family. In terms of assembly, homodimer. As to expression, expressed in pineal gland and retina.

The catalysed reaction is N-acetylserotonin + S-adenosyl-L-methionine = melatonin + S-adenosyl-L-homocysteine + H(+). Its pathway is aromatic compound metabolism; melatonin biosynthesis; melatonin from serotonin: step 1/2. In terms of biological role, catalyzes the transfer of a methyl group onto N-acetylserotonin, producing melatonin (N-acetyl-5-methoxytryptamine). The sequence is that of Acetylserotonin O-methyltransferase (ASMT) from Gallus gallus (Chicken).